The following is a 502-amino-acid chain: 9-beta-pimara-7,15-diene oxidase (502 aa).

The next 2 helical transmembrane spans lie at 4-26 (INSE…ALLT) and 106-128 (LLVS…GAYW). Position 438 (C438) interacts with heme.

The protein belongs to the cytochrome P450 family. It depends on heme as a cofactor.

The protein localises to the membrane. It carries out the reaction 9beta-pimara-7,15-diene + 3 reduced [NADPH--hemoprotein reductase] + 3 O2 = 9beta-pimara-7,15-dien-19-oate + 3 oxidized [NADPH--hemoprotein reductase] + 4 H2O + 4 H(+). Functionally, involved in momilactone phytoalexins biosynthesis; acts as a multifunctional diterpene oxidase. Participates in the biosynthetic steps between 9-beta-pimara-7,15-diene and 3-beta-hydroxy-9-beta-pimara-7,15-dien-19,6-beta-olide. Also catalyzes consecutive oxidations at C19 of syn-stemod-13(17)-ene. The protein is 9-beta-pimara-7,15-diene oxidase (CYP99A3) of Oryza sativa subsp. japonica (Rice).